Here is a 207-residue protein sequence, read N- to C-terminus: dTTP/UTP pyrophosphatase (207 aa).

Aspartate 87 serves as the catalytic Proton acceptor.

It belongs to the Maf family. YhdE subfamily. Requires a divalent metal cation as cofactor.

The protein localises to the cytoplasm. The enzyme catalyses dTTP + H2O = dTMP + diphosphate + H(+). The catalysed reaction is UTP + H2O = UMP + diphosphate + H(+). Functionally, nucleoside triphosphate pyrophosphatase that hydrolyzes dTTP and UTP. May have a dual role in cell division arrest and in preventing the incorporation of modified nucleotides into cellular nucleic acids. This Nitrosomonas europaea (strain ATCC 19718 / CIP 103999 / KCTC 2705 / NBRC 14298) protein is dTTP/UTP pyrophosphatase.